The chain runs to 518 residues: Glutamate--cysteine ligase (518 aa).

The protein belongs to the glutamate--cysteine ligase type 1 family. Type 1 subfamily.

It carries out the reaction L-cysteine + L-glutamate + ATP = gamma-L-glutamyl-L-cysteine + ADP + phosphate + H(+). It functions in the pathway sulfur metabolism; glutathione biosynthesis; glutathione from L-cysteine and L-glutamate: step 1/2. This is Glutamate--cysteine ligase from Salmonella arizonae (strain ATCC BAA-731 / CDC346-86 / RSK2980).